The sequence spans 109 residues: Large ribosomal subunit protein uL24 (109 aa).

Belongs to the universal ribosomal protein uL24 family. In terms of assembly, part of the 50S ribosomal subunit.

Functionally, one of two assembly initiator proteins, it binds directly to the 5'-end of the 23S rRNA, where it nucleates assembly of the 50S subunit. One of the proteins that surrounds the polypeptide exit tunnel on the outside of the subunit. The polypeptide is Large ribosomal subunit protein uL24 (Rickettsia canadensis (strain McKiel)).